The chain runs to 323 residues: MKNIAIIMGGYSSEYKISLISGNVVYQYLDKTKYNGFRIHIFKEKWVYVDANDAEFPIDRNDFSVTVNGEKITFDCVFNAIHGTPGEDGLMQAYFELIGLPQSSCDYYQSALTFNKRDLLSVLKPYGIKTAISYYLNKGDEINTAEIVKKVGLPCFVKPNKAGSSFGISKVKSEAELPIAIEVAYKEDNEIIIESFLDGTEVSVGVINYKGEIKVLPITEIVSDNDFFDYEAKYEGKSQEITPARISDELTQKVGETAKRAYEVLKMKGFSRSEFIIVDNEPYMLEMNTIPGLTTESLIPQQAKAAGISLEDLFTNAIELSLA.

One can recognise an ATP-grasp domain in the interval 120-319 (LSVLKPYGIK…LEDLFTNAIE (200 aa)). ATP is bound at residue 148–203 (VKKVGLPCFVKPNKAGSSFGISKVKSEAELPIAIEVAYKEDNEIIIESFLDGTEVS). The Mg(2+) site is built by Glu274, Glu286, and Asn288.

Belongs to the D-alanine--D-alanine ligase family. The cofactor is Mg(2+). It depends on Mn(2+) as a cofactor.

Its subcellular location is the cytoplasm. The enzyme catalyses 2 D-alanine + ATP = D-alanyl-D-alanine + ADP + phosphate + H(+). It participates in cell wall biogenesis; peptidoglycan biosynthesis. In terms of biological role, cell wall formation. This chain is D-alanine--D-alanine ligase, found in Flavobacterium johnsoniae (strain ATCC 17061 / DSM 2064 / JCM 8514 / BCRC 14874 / CCUG 350202 / NBRC 14942 / NCIMB 11054 / UW101) (Cytophaga johnsonae).